A 488-amino-acid chain; its full sequence is Serine hydroxymethyltransferase, mitochondrial (488 aa).

Residues 1–20 (MAVLRQFVKNSYSSIPKRFY) constitute a mitochondrion transit peptide. An N6-(pyridoxal phosphate)lysine modification is found at Lys-265.

Belongs to the SHMT family. As to quaternary structure, homotetramer. It depends on pyridoxal 5'-phosphate as a cofactor.

The protein localises to the mitochondrion. It catalyses the reaction (6R)-5,10-methylene-5,6,7,8-tetrahydrofolate + glycine + H2O = (6S)-5,6,7,8-tetrahydrofolate + L-serine. The protein operates within one-carbon metabolism; tetrahydrofolate interconversion. Functionally, interconversion of serine and glycine. The sequence is that of Serine hydroxymethyltransferase, mitochondrial (shm2) from Schizosaccharomyces pombe (strain 972 / ATCC 24843) (Fission yeast).